The chain runs to 479 residues: NADH dehydrogenase [ubiquinone] flavoprotein 1, mitochondrial (479 aa).

103–112 (GRGGAGFPSG) is an NADH binding site. 216–264 (RGAGAYICGEETALIESIEGKQGKPRLKPPFPAMAGLYGCPTTVTNVET) contributes to the FMN binding site. Residues C396, C399, C402, and C442 each coordinate [4Fe-4S] cluster.

The protein belongs to the complex I 51 kDa subunit family. Complex I is composed of about 45 different subunits. This is a component of the flavoprotein-sulfur (FP) fragment of the enzyme. Requires FMN as cofactor. It depends on [4Fe-4S] cluster as a cofactor.

The protein localises to the mitochondrion inner membrane. It carries out the reaction a ubiquinone + NADH + 5 H(+)(in) = a ubiquinol + NAD(+) + 4 H(+)(out). Its function is as follows. Core subunit of the mitochondrial membrane respiratory chain NADH dehydrogenase (Complex I) that is believed to belong to the minimal assembly required for catalysis. Complex I functions in the transfer of electrons from NADH to the respiratory chain. The immediate electron acceptor for the enzyme is believed to be ubiquinone. The chain is NADH dehydrogenase [ubiquinone] flavoprotein 1, mitochondrial (ndufv1) from Dictyostelium discoideum (Social amoeba).